The following is a 204-amino-acid chain: Holliday junction branch migration complex subunit RuvA (204 aa).

A domain I region spans residues Met1 to Ala64. Residues Gln65–Glu143 form a domain II region. Residues Ser144 to Ser155 are flexible linker. Positions His156–Leu204 are domain III.

Belongs to the RuvA family. As to quaternary structure, homotetramer. Forms an RuvA(8)-RuvB(12)-Holliday junction (HJ) complex. HJ DNA is sandwiched between 2 RuvA tetramers; dsDNA enters through RuvA and exits via RuvB. An RuvB hexamer assembles on each DNA strand where it exits the tetramer. Each RuvB hexamer is contacted by two RuvA subunits (via domain III) on 2 adjacent RuvB subunits; this complex drives branch migration. In the full resolvosome a probable DNA-RuvA(4)-RuvB(12)-RuvC(2) complex forms which resolves the HJ.

It localises to the cytoplasm. The RuvA-RuvB-RuvC complex processes Holliday junction (HJ) DNA during genetic recombination and DNA repair, while the RuvA-RuvB complex plays an important role in the rescue of blocked DNA replication forks via replication fork reversal (RFR). RuvA specifically binds to HJ cruciform DNA, conferring on it an open structure. The RuvB hexamer acts as an ATP-dependent pump, pulling dsDNA into and through the RuvAB complex. HJ branch migration allows RuvC to scan DNA until it finds its consensus sequence, where it cleaves and resolves the cruciform DNA. The chain is Holliday junction branch migration complex subunit RuvA from Haemophilus influenzae (strain ATCC 51907 / DSM 11121 / KW20 / Rd).